Reading from the N-terminus, the 396-residue chain is Elongation factor Tu 2 (396 aa).

The region spanning 10-206 (KPHVNVGTIG…ALDTYIPTPE (197 aa)) is the tr-type G domain. Residues 19–26 (GHVDHGKT) form a G1 region. 19 to 26 (GHVDHGKT) is a GTP binding site. Residue threonine 26 participates in Mg(2+) binding. Residues 60 to 64 (GITIN) are G2. Positions 81-84 (DCPG) are G3. Residues 81-85 (DCPGH) and 136-139 (NKAD) each bind GTP. Residues 136-139 (NKAD) form a G4 region. Residues 174-176 (SAK) form a G5 region.

Belongs to the TRAFAC class translation factor GTPase superfamily. Classic translation factor GTPase family. EF-Tu/EF-1A subfamily. As to quaternary structure, monomer.

The protein localises to the cytoplasm. It catalyses the reaction GTP + H2O = GDP + phosphate + H(+). Functionally, GTP hydrolase that promotes the GTP-dependent binding of aminoacyl-tRNA to the A-site of ribosomes during protein biosynthesis. The sequence is that of Elongation factor Tu 2 from Methylobacillus flagellatus (strain ATCC 51484 / DSM 6875 / VKM B-1610 / KT).